A 482-amino-acid polypeptide reads, in one-letter code: 2-succinylbenzoate--CoA ligase (482 aa).

Belongs to the ATP-dependent AMP-binding enzyme family. MenE subfamily.

The enzyme catalyses 2-succinylbenzoate + ATP + CoA = 2-succinylbenzoyl-CoA + AMP + diphosphate. The protein operates within quinol/quinone metabolism; 1,4-dihydroxy-2-naphthoate biosynthesis; 1,4-dihydroxy-2-naphthoate from chorismate: step 5/7. Its pathway is quinol/quinone metabolism; menaquinone biosynthesis. Converts 2-succinylbenzoate (OSB) to 2-succinylbenzoyl-CoA (OSB-CoA). This is 2-succinylbenzoate--CoA ligase from Bacillus cereus (strain ZK / E33L).